The following is a 117-amino-acid chain: Anti-sigma F factor antagonist (117 aa).

The 114-residue stretch at 2–115 (HFQLEMVTRE…QAIDRVRGIV (114 aa)) folds into the STAS domain. Ser-58 carries the post-translational modification Phosphoserine.

Belongs to the anti-sigma-factor antagonist family. Post-translationally, phosphorylated by SpoIIAB on a serine residue.

In terms of biological role, in the phosphorylated form it could act as an anti-anti-sigma factor that counteracts SpoIIAB and thus releases sigma f from inhibition. The polypeptide is Anti-sigma F factor antagonist (spoIIAA) (Lysinibacillus sphaericus (Bacillus sphaericus)).